The following is a 481-amino-acid chain: UDP-N-acetylmuramoyl-L-alanyl-D-glutamate--L-lysine ligase (481 aa).

Ser42 serves as a coordination point for UDP-N-acetyl-alpha-D-muramoyl-L-alanyl-D-glutamate. 118-124 (GTKGKTT) contacts ATP. UDP-N-acetyl-alpha-D-muramoyl-L-alanyl-D-glutamate is bound by residues 160–161 (TT), Ser187, and Arg195. The residue at position 229 (Lys229) is an N6-carboxylysine. Residues 404–407 (DDPN) carry the L-lysine recognition motif motif.

This sequence belongs to the MurCDEF family. MurE subfamily. Carboxylation is probably crucial for Mg(2+) binding and, consequently, for the gamma-phosphate positioning of ATP.

The protein localises to the cytoplasm. The catalysed reaction is UDP-N-acetyl-alpha-D-muramoyl-L-alanyl-D-glutamate + L-lysine + ATP = UDP-N-acetyl-alpha-D-muramoyl-L-alanyl-gamma-D-glutamyl-L-lysine + ADP + phosphate + H(+). It functions in the pathway cell wall biogenesis; peptidoglycan biosynthesis. In terms of biological role, catalyzes the addition of L-lysine to the nucleotide precursor UDP-N-acetylmuramoyl-L-alanyl-D-glutamate (UMAG) in the biosynthesis of bacterial cell-wall peptidoglycan. The chain is UDP-N-acetylmuramoyl-L-alanyl-D-glutamate--L-lysine ligase from Streptococcus suis (strain 98HAH33).